An 89-amino-acid polypeptide reads, in one-letter code: Small ribosomal subunit protein uS15 (89 aa).

This sequence belongs to the universal ribosomal protein uS15 family. As to quaternary structure, part of the 30S ribosomal subunit. Forms a bridge to the 50S subunit in the 70S ribosome, contacting the 23S rRNA.

Functionally, one of the primary rRNA binding proteins, it binds directly to 16S rRNA where it helps nucleate assembly of the platform of the 30S subunit by binding and bridging several RNA helices of the 16S rRNA. In terms of biological role, forms an intersubunit bridge (bridge B4) with the 23S rRNA of the 50S subunit in the ribosome. The sequence is that of Small ribosomal subunit protein uS15 from Bacteroides thetaiotaomicron (strain ATCC 29148 / DSM 2079 / JCM 5827 / CCUG 10774 / NCTC 10582 / VPI-5482 / E50).